A 377-amino-acid chain; its full sequence is Flagellin C (377 aa).

2 coiled-coil regions span residues Ser103–Thr129 and Val301–Asp340.

The protein belongs to the bacterial flagellin family. Heteromer of multiple flagellin subunits including FlaA, FlaB, FlaC, FlaD and possibly FlaE.

Its subcellular location is the secreted. The protein localises to the bacterial flagellum. In terms of biological role, flagellin is the subunit protein which polymerizes to form the filaments of bacterial flagella. FlaC is not essential for flagellar synthesis and motility. This is Flagellin C (flaC) from Vibrio anguillarum (Listonella anguillarum).